Consider the following 2250-residue polypeptide: DNA polymerase epsilon catalytic subunit A (2250 aa).

3 disordered regions span residues 1–63 (MPSR…GTAA), 235–259 (NGHGDDENRAWGAEDDTKKKKDKEP), and 1990–2010 (PGTEATSTMNPTKEKEKKAAS). A compositionally biased stretch (gly residues) spans 32 to 41 (GGGGGGGGVA). Basic and acidic residues predominate over residues 249–259 (DDTKKKKDKEP). Residues 1990-2000 (PGTEATSTMNP) show a composition bias toward polar residues. Residues Cys-2118, Cys-2121, Cys-2156, and Cys-2159 each contribute to the Zn(2+) site. A CysA-type zinc finger spans residues 2118-2159 (CKKCNAIRDVDLCRDPDRLPSVNPDSGEMLEPARKNWVCHKC). [4Fe-4S] cluster contacts are provided by Cys-2190, Cys-2193, Cys-2205, and Cys-2207. A CysB motif motif is present at residues 2190 to 2207 (CLKCSQTKSDNLAATCKC).

This sequence belongs to the DNA polymerase type-B family. Heterotetramer. Consists of 4 subunits: POL2, DPB2, DPB3 and DPB4. Requires [4Fe-4S] cluster as cofactor.

It is found in the nucleus. The enzyme catalyses DNA(n) + a 2'-deoxyribonucleoside 5'-triphosphate = DNA(n+1) + diphosphate. Functionally, DNA polymerase II participates in chromosomal DNA replication. In Cryptococcus neoformans var. neoformans serotype D (strain JEC21 / ATCC MYA-565) (Filobasidiella neoformans), this protein is DNA polymerase epsilon catalytic subunit A (POL2).